The chain runs to 209 residues: Large ribosomal subunit protein uL3 (209 aa).

It belongs to the universal ribosomal protein uL3 family. In terms of assembly, part of the 50S ribosomal subunit. Forms a cluster with proteins L14 and L19.

Its function is as follows. One of the primary rRNA binding proteins, it binds directly near the 3'-end of the 23S rRNA, where it nucleates assembly of the 50S subunit. This Clostridium tetani (strain Massachusetts / E88) protein is Large ribosomal subunit protein uL3.